Here is a 364-residue protein sequence, read N- to C-terminus: NAD(P)H-quinone oxidoreductase subunit 1, chloroplastic (364 aa).

Transmembrane regions (helical) follow at residues 27-47 (IWLLVPIFTPVSGILIGVLVI), 98-118 (FSVGPSIAVISILLSYSVIPF), 127-147 (ISIGVFLWIAISSIAPIGLLM), 255-275 (GLFYVASYLNLLVSSLFVTVL), 301-321 (VFGSTIGILITLAKAYLFLFV), and 337-357 (LLNLGWKFLLPIALGNLLLTT).

This sequence belongs to the complex I subunit 1 family. As to quaternary structure, NDH is composed of at least 16 different subunits, 5 of which are encoded in the nucleus.

It localises to the plastid. Its subcellular location is the chloroplast thylakoid membrane. It carries out the reaction a plastoquinone + NADH + (n+1) H(+)(in) = a plastoquinol + NAD(+) + n H(+)(out). It catalyses the reaction a plastoquinone + NADPH + (n+1) H(+)(in) = a plastoquinol + NADP(+) + n H(+)(out). In terms of biological role, NDH shuttles electrons from NAD(P)H:plastoquinone, via FMN and iron-sulfur (Fe-S) centers, to quinones in the photosynthetic chain and possibly in a chloroplast respiratory chain. The immediate electron acceptor for the enzyme in this species is believed to be plastoquinone. Couples the redox reaction to proton translocation, and thus conserves the redox energy in a proton gradient. In Illicium oligandrum (Star anise), this protein is NAD(P)H-quinone oxidoreductase subunit 1, chloroplastic.